We begin with the raw amino-acid sequence, 426 residues long: Glutamyl-tRNA reductase (426 aa).

Substrate is bound by residues 50 to 53, Ser-108, 113 to 115, and Gln-119; these read TCNR and EPQ. The active-site Nucleophile is the Cys-51. Residue 188-193 participates in NADP(+) binding; sequence GAGEMI.

It belongs to the glutamyl-tRNA reductase family. As to quaternary structure, homodimer.

The enzyme catalyses (S)-4-amino-5-oxopentanoate + tRNA(Glu) + NADP(+) = L-glutamyl-tRNA(Glu) + NADPH + H(+). It participates in porphyrin-containing compound metabolism; protoporphyrin-IX biosynthesis; 5-aminolevulinate from L-glutamyl-tRNA(Glu): step 1/2. Its function is as follows. Catalyzes the NADPH-dependent reduction of glutamyl-tRNA(Glu) to glutamate 1-semialdehyde (GSA). This is Glutamyl-tRNA reductase from Polaromonas sp. (strain JS666 / ATCC BAA-500).